Here is a 544-residue protein sequence, read N- to C-terminus: Probable protein kinase UbiB (544 aa).

The 379-residue stretch at 123 to 501 (DFDIKPLASA…KRQQAKGQFL (379 aa)) folds into the Protein kinase domain. ATP-binding positions include 129 to 137 (LASASIAQV) and Lys152. Residue Asp287 is the Proton acceptor of the active site. A helical membrane pass occupies residues 515–537 (LLTSNITVLASISAATGAAFWLF).

The protein belongs to the ABC1 family. UbiB subfamily.

The protein localises to the cell inner membrane. Its pathway is cofactor biosynthesis; ubiquinone biosynthesis [regulation]. Is probably a protein kinase regulator of UbiI activity which is involved in aerobic coenzyme Q (ubiquinone) biosynthesis. In Aliivibrio fischeri (strain ATCC 700601 / ES114) (Vibrio fischeri), this protein is Probable protein kinase UbiB.